Here is a 374-residue protein sequence, read N- to C-terminus: Chaperone protein DnaJ (374 aa).

One can recognise a J domain in the interval 5-70; the sequence is DYYEVLGVNL…RKRASYDQFG (66 aa). The CR-type zinc finger occupies 133-210; that stretch reads GLSRTIKVPT…CHGQGRQQQT (78 aa). Zn(2+) is bound by residues Cys-146, Cys-149, Cys-162, Cys-165, Cys-184, Cys-187, Cys-198, and Cys-201. 4 CXXCXGXG motif repeats span residues 146–153, 162–169, 184–191, and 198–205; these read CKTCNGSG, CPRCNGSG, CSVCRGRG, and CTDCHGQG.

Belongs to the DnaJ family. As to quaternary structure, homodimer. It depends on Zn(2+) as a cofactor.

The protein localises to the cytoplasm. Participates actively in the response to hyperosmotic and heat shock by preventing the aggregation of stress-denatured proteins and by disaggregating proteins, also in an autonomous, DnaK-independent fashion. Unfolded proteins bind initially to DnaJ; upon interaction with the DnaJ-bound protein, DnaK hydrolyzes its bound ATP, resulting in the formation of a stable complex. GrpE releases ADP from DnaK; ATP binding to DnaK triggers the release of the substrate protein, thus completing the reaction cycle. Several rounds of ATP-dependent interactions between DnaJ, DnaK and GrpE are required for fully efficient folding. Also involved, together with DnaK and GrpE, in the DNA replication of plasmids through activation of initiation proteins. This Coxiella burnetii (strain RSA 493 / Nine Mile phase I) protein is Chaperone protein DnaJ.